An 815-amino-acid chain; its full sequence is Cell division cycle protein 48 (815 aa).

Positions 1 to 30 are disordered; sequence MNAPSTMTDKKPEVEHLQGENPPKDTYSAE. Positions 8 to 18 are enriched in basic and acidic residues; that stretch reads TDKKPEVEHLQ. Residues 267–273, N368, H404, and 541–546 contribute to the ATP site; these read PGTGKTL and GTGKTL. The segment at 794 to 815 is disordered; it reads DSADSNTNGPSFGNDGADDLYA. The span at 795–804 shows a compositional bias: polar residues; that stretch reads SADSNTNGPS.

This sequence belongs to the AAA ATPase family. In terms of assembly, component of the ribosome quality control complex (RQC), composed of the E3 ubiquitin ligase rkr1/ltn1, rqc1 and mtr1/rqc2, as well as cdc48 and its ubiquitin-binding cofactors. RQC forms a stable complex with 60S ribosomal subunits. Interacts with ubx2 and ubx3. Interacts with lub1. Interacts with rbd2 (via C-terminal SHP box); the interaction is required for rbd2-mediated cleavage of sre1 and sre2.

The protein localises to the cytoplasm. It localises to the nucleus. The catalysed reaction is ATP + H2O = ADP + phosphate + H(+). The first ATP-binding region has low ATPase activity. The second ATP-binding region is responsible for ATPase activity. ATP binding to the first ATP-binding region induces intrinsic activity of the second ATP-binding region. While ATP binding to the first ATP-binding region appears to prevent ATP hydrolysis by the second ATP-binding region, ADP-binding to first region promotes the coordinate and cooperative ATPase cycle of the second ATP-binding region. ATP binding to the first ATP-binding region induces a conformational change, promoting the rotation of the first ATP-binding region relative to the second ATP-binding region in the hexamer. Its function is as follows. ATP-dependent chaperone which probably uses the energy provided by ATP hydrolysis to generate mechanical force to unfold substrate proteins, disassemble protein complexes, and disaggregate protein aggregates. By recruiting and promoting the degradation of ubiquitinated proteins, plays a role in the ubiquitin fusion degradation (UFD) pathway. Has a role in the endoplasmic reticulum-associated degradation (ERAD) pathway which mediates the cytoplasmic elimination of misfolded proteins exported from the ER. Involved in spindle disassembly. Component of the ribosome quality control complex (RQC), a ribosome-associated complex that mediates ubiquitination and extraction of incompletely synthesized nascent chains for proteasomal degradation. CDC48 may provide the mechanical force that dislodges the polyubiquitinated nascent peptides from the exit channel. Required for ribophagy, a process which relocalizes ribosomal particles into the vacuole for degradation in response to starvation. Has a role in substrate recognition mediating rbd2-dependent cleavage of sterol regulatory element-binding protein sre1 and sre2. The polypeptide is Cell division cycle protein 48 (Schizosaccharomyces pombe (strain 972 / ATCC 24843) (Fission yeast)).